The following is a 537-amino-acid chain: O-phosphoserine--tRNA(Cys) ligase (537 aa).

Residues 186-188 (HMT), 231-233 (SAS), 273-274 (YY), and asparagine 317 each bind substrate.

It belongs to the class-II aminoacyl-tRNA synthetase family. O-phosphoseryl-tRNA(Cys) synthetase subfamily. Homotetramer. Interacts with SepCysS.

The enzyme catalyses tRNA(Cys) + O-phospho-L-serine + ATP = O-phospho-L-seryl-tRNA(Cys) + AMP + diphosphate. Functionally, catalyzes the attachment of O-phosphoserine (Sep) to tRNA(Cys). The polypeptide is O-phosphoserine--tRNA(Cys) ligase (Methanococcus vannielii (strain ATCC 35089 / DSM 1224 / JCM 13029 / OCM 148 / SB)).